A 436-amino-acid chain; its full sequence is Serine--tRNA ligase (436 aa).

Residue 242-244 (TAE) participates in L-serine binding. 273–275 (RSE) is an ATP binding site. Residue E296 coordinates L-serine. 360–363 (EISS) contributes to the ATP binding site. An L-serine-binding site is contributed by S395.

It belongs to the class-II aminoacyl-tRNA synthetase family. Type-1 seryl-tRNA synthetase subfamily. As to quaternary structure, homodimer. The tRNA molecule binds across the dimer.

The protein resides in the cytoplasm. It catalyses the reaction tRNA(Ser) + L-serine + ATP = L-seryl-tRNA(Ser) + AMP + diphosphate + H(+). The enzyme catalyses tRNA(Sec) + L-serine + ATP = L-seryl-tRNA(Sec) + AMP + diphosphate + H(+). It participates in aminoacyl-tRNA biosynthesis; selenocysteinyl-tRNA(Sec) biosynthesis; L-seryl-tRNA(Sec) from L-serine and tRNA(Sec): step 1/1. Its function is as follows. Catalyzes the attachment of serine to tRNA(Ser). Is also able to aminoacylate tRNA(Sec) with serine, to form the misacylated tRNA L-seryl-tRNA(Sec), which will be further converted into selenocysteinyl-tRNA(Sec). The protein is Serine--tRNA ligase of Polynucleobacter asymbioticus (strain DSM 18221 / CIP 109841 / QLW-P1DMWA-1) (Polynucleobacter necessarius subsp. asymbioticus).